We begin with the raw amino-acid sequence, 183 residues long: Putative manganese efflux pump MntP (183 aa).

6 consecutive transmembrane segments (helical) span residues 6–26 (LFLI…CIGL), 40–60 (IYFG…GFLF), 64–84 (IATM…IIMI), 101–121 (MNII…FTAL), 135–155 (LFIG…SKYL), and 158–178 (IDVI…FFGL).

It belongs to the MntP (TC 9.B.29) family.

The protein resides in the cell membrane. Its function is as follows. Probably functions as a manganese efflux pump. The chain is Putative manganese efflux pump MntP from Clostridium tetani (strain Massachusetts / E88).